The sequence spans 125 residues: Small ribosomal subunit protein uS12 (125 aa).

Residue aspartate 89 is modified to 3-methylthioaspartic acid.

It belongs to the universal ribosomal protein uS12 family. In terms of assembly, part of the 30S ribosomal subunit. Contacts proteins S8 and S17. May interact with IF1 in the 30S initiation complex.

With S4 and S5 plays an important role in translational accuracy. Functionally, interacts with and stabilizes bases of the 16S rRNA that are involved in tRNA selection in the A site and with the mRNA backbone. Located at the interface of the 30S and 50S subunits, it traverses the body of the 30S subunit contacting proteins on the other side and probably holding the rRNA structure together. The combined cluster of proteins S8, S12 and S17 appears to hold together the shoulder and platform of the 30S subunit. The protein is Small ribosomal subunit protein uS12 of Bordetella petrii (strain ATCC BAA-461 / DSM 12804 / CCUG 43448).